The sequence spans 203 residues: Urease accessory protein UreG (203 aa).

Residue glycine 14–threonine 21 participates in GTP binding.

Belongs to the SIMIBI class G3E GTPase family. UreG subfamily. As to quaternary structure, homodimer. UreD, UreF and UreG form a complex that acts as a GTP-hydrolysis-dependent molecular chaperone, activating the urease apoprotein by helping to assemble the nickel containing metallocenter of UreC. The UreE protein probably delivers the nickel.

The protein localises to the cytoplasm. Functionally, facilitates the functional incorporation of the urease nickel metallocenter. This process requires GTP hydrolysis, probably effectuated by UreG. The sequence is that of Urease accessory protein UreG from Rhizobium rhizogenes (strain K84 / ATCC BAA-868) (Agrobacterium radiobacter).